A 375-amino-acid polypeptide reads, in one-letter code: Proclotting enzyme (375 aa).

An N-terminal signal peptide occupies residues 1–21 (MLVNNVFSLLCFPLLMSVVRC). The propeptide occupies 22–27 (STLSRQ). Gln30 is subject to Pyrrolidone carboxylic acid. Residues 39-84 (LCSNRFTEEGTCKNVLDCRILLQKNDYNLLKESICGFEGITPKVCC) enclose the Clip domain. 3 disulfide bridges follow: Cys40–Cys83, Cys50–Cys73, and Cys56–Cys84. Residues 90-113 (VISSTQAPPETTTTERPPKQIPPN) are disordered. Cystine bridges form between Cys118–Cys248, Cys157–Cys173, Cys295–Cys311, and Cys322–Cys351. Asn122 is a glycosylation site (N-linked (GlcNAc...) asparagine). Positions 128–375 (IIGGREAPIG…FLDWIAEHMV (248 aa)) constitute a Peptidase S1 domain. Residue His172 is the Charge relay system of the active site. Ca(2+) contacts are provided by Glu194, Asn196, Ser199, and Asp202. Catalysis depends on Asp228, which acts as the Charge relay system. Residues Asn235 and Asn304 are each glycosylated (N-linked (GlcNAc...) asparagine). Ser326 serves as the catalytic Charge relay system.

Belongs to the peptidase S1 family. CLIP subfamily. As to quaternary structure, in the active form, heterodimer of a light chain and a heavy chain; disulfide-linked. Forms a covalent heterodimer with intracellular coagulation inhibitor 2/LICI-2. In terms of processing, proteolytically cleaved into its mature active form by serine protease factor B. Cleavage produces a 25 kDa light chain containing the CLIP domain and a catalytic 31 kDa heavy chain which remain covalently associated through an interchain disulfide bond. Proteolytically cleaved by clotting factor G subunit beta. Post-translationally, contains six O-linked carbohydrate chains in the N-terminal light chain. Expressed in hemocytes (at protein level).

It localises to the cytoplasmic vesicle. It is found in the secretory vesicle. Its subcellular location is the secreted. The catalysed reaction is Selective cleavage of 18-Arg-|- and 47-Arg-|- bonds in coagulogen to form coagulin and fragments.. Its activity is regulated as follows. Inhibited by intracellular coagulation inhibitor 2/LICI-2 and to a lesser extent by intracellular coagulation inhibitor 3/LICI-3. In terms of biological role, this enzyme is closely associated with an endotoxin-sensitive hemolymph coagulation system in limulus. Its active form catalyzes the conversion of coagulogen to insoluble coagulin gel. This Tachypleus tridentatus (Japanese horseshoe crab) protein is Proclotting enzyme.